Consider the following 155-residue polypeptide: Small ribosomal subunit protein uS7 (155 aa).

The protein belongs to the universal ribosomal protein uS7 family. Part of the 30S ribosomal subunit. Contacts proteins S9 and S11.

One of the primary rRNA binding proteins, it binds directly to 16S rRNA where it nucleates assembly of the head domain of the 30S subunit. Is located at the subunit interface close to the decoding center, probably blocks exit of the E-site tRNA. This is Small ribosomal subunit protein uS7 from Malacoplasma penetrans (strain HF-2) (Mycoplasma penetrans).